We begin with the raw amino-acid sequence, 101 residues long: Small ribosomal subunit protein uS14 (101 aa).

The protein belongs to the universal ribosomal protein uS14 family. Part of the 30S ribosomal subunit. Contacts proteins S3 and S10.

In terms of biological role, binds 16S rRNA, required for the assembly of 30S particles and may also be responsible for determining the conformation of the 16S rRNA at the A site. The chain is Small ribosomal subunit protein uS14 from Burkholderia mallei (strain NCTC 10247).